We begin with the raw amino-acid sequence, 162 residues long: Crossover junction endodeoxyribonuclease RuvC (162 aa).

Active-site residues include aspartate 7, glutamate 67, and aspartate 140. Mg(2+)-binding residues include aspartate 7, glutamate 67, and aspartate 140.

It belongs to the RuvC family. As to quaternary structure, homodimer which binds Holliday junction (HJ) DNA. The HJ becomes 2-fold symmetrical on binding to RuvC with unstacked arms; it has a different conformation from HJ DNA in complex with RuvA. In the full resolvosome a probable DNA-RuvA(4)-RuvB(12)-RuvC(2) complex forms which resolves the HJ. The cofactor is Mg(2+).

It is found in the cytoplasm. It carries out the reaction Endonucleolytic cleavage at a junction such as a reciprocal single-stranded crossover between two homologous DNA duplexes (Holliday junction).. Its function is as follows. The RuvA-RuvB-RuvC complex processes Holliday junction (HJ) DNA during genetic recombination and DNA repair. Endonuclease that resolves HJ intermediates. Cleaves cruciform DNA by making single-stranded nicks across the HJ at symmetrical positions within the homologous arms, yielding a 5'-phosphate and a 3'-hydroxyl group; requires a central core of homology in the junction. The consensus cleavage sequence is 5'-(A/T)TT(C/G)-3'. Cleavage occurs on the 3'-side of the TT dinucleotide at the point of strand exchange. HJ branch migration catalyzed by RuvA-RuvB allows RuvC to scan DNA until it finds its consensus sequence, where it cleaves and resolves the cruciform DNA. The protein is Crossover junction endodeoxyribonuclease RuvC of Wolinella succinogenes (strain ATCC 29543 / DSM 1740 / CCUG 13145 / JCM 31913 / LMG 7466 / NCTC 11488 / FDC 602W) (Vibrio succinogenes).